The chain runs to 341 residues: HTH-type transcriptional repressor PurR (341 aa).

The 55-residue stretch at 2–56 (ATIKDVAKHAGVSTTTVSHVINKTRFVAENTKAAVWAAIKELHYSPSAVARSLKV) folds into the HTH lacI-type domain. Residues 4–23 (IKDVAKHAGVSTTTVSHVIN) constitute a DNA-binding region (H-T-H motif). The DNA-binding element occupies 48–56 (SAVARSLKV). Positions 73, 190, 192, 221, and 275 each coordinate hypoxanthine.

In terms of assembly, homodimer.

Its pathway is purine metabolism; purine nucleotide biosynthesis [regulation]. Functionally, is the main repressor of the genes involved in the de novo synthesis of purine nucleotides, regulating purB, purC, purEK, purF, purHD, purL, purMN and guaBA expression. PurR is allosterically activated to bind its cognate DNA by binding the purine corepressors, hypoxanthine or guanine, thereby effecting transcription repression. The protein is HTH-type transcriptional repressor PurR of Yersinia enterocolitica serotype O:8 / biotype 1B (strain NCTC 13174 / 8081).